The following is a 282-amino-acid chain: NADPH-dependent 7-cyano-7-deazaguanine reductase (282 aa).

Position 88-90 (88-90) interacts with substrate; that stretch reads IES. 90–91 provides a ligand contact to NADPH; the sequence is SK. The active-site Thioimide intermediate is the cysteine 190. Aspartate 197 acts as the Proton donor in catalysis. 229 to 230 contributes to the substrate binding site; that stretch reads HE. Residue 258–259 participates in NADPH binding; the sequence is RG.

Belongs to the GTP cyclohydrolase I family. QueF type 2 subfamily. In terms of assembly, homodimer.

Its subcellular location is the cytoplasm. It carries out the reaction 7-aminomethyl-7-carbaguanine + 2 NADP(+) = 7-cyano-7-deazaguanine + 2 NADPH + 3 H(+). Its pathway is tRNA modification; tRNA-queuosine biosynthesis. Functionally, catalyzes the NADPH-dependent reduction of 7-cyano-7-deazaguanine (preQ0) to 7-aminomethyl-7-deazaguanine (preQ1). The sequence is that of NADPH-dependent 7-cyano-7-deazaguanine reductase from Escherichia coli O139:H28 (strain E24377A / ETEC).